Consider the following 62-residue polypeptide: Conotoxin Tx5.1 (62 aa).

A signal peptide spans M1–A22. Residues Q23–R49 constitute a propeptide that is removed on maturation. Q60 carries the glutamine amide modification.

Belongs to the conotoxin T superfamily. Post-translationally, contains 2 disulfide bonds that can be either 'C1-C3, C2-C4' or 'C1-C4, C2-C3', since these disulfide connectivities have been observed for conotoxins with cysteine framework V (for examples, see AC P0DQQ7 and AC P81755). Expressed by the venom duct.

It is found in the secreted. This chain is Conotoxin Tx5.1, found in Conus textile (Cloth-of-gold cone).